Consider the following 250-residue polypeptide: Proteasome subunit alpha type-4-A (250 aa).

Residues Lys40 and Lys64 each participate in a glycyl lysine isopeptide (Lys-Gly) (interchain with G-Cter in ubiquitin) cross-link.

Belongs to the peptidase T1A family. In terms of assembly, component of the 20S core complex of the 26S proteasome. The 26S proteasome is composed of a core protease (CP), known as the 20S proteasome, capped at one or both ends by the 19S regulatory particle (RP/PA700). The 20S proteasome core is composed of 28 subunits that are arranged in four stacked rings, resulting in a barrel-shaped structure. The two end rings are each formed by seven alpha subunits, and the two central rings are each formed by seven beta subunits. The catalytic chamber with the active sites is on the inside of the barrel. In terms of tissue distribution, ubiquitous low levels, higher expression in siliques and flowers.

The protein resides in the cytoplasm. It localises to the nucleus. Its function is as follows. The proteasome is a multicatalytic proteinase complex which is characterized by its ability to cleave peptides with Arg, Phe, Tyr, Leu, and Glu adjacent to the leaving group at neutral or slightly basic pH. The proteasome has an ATP-dependent proteolytic activity. The chain is Proteasome subunit alpha type-4-A (PAC1) from Arabidopsis thaliana (Mouse-ear cress).